Consider the following 212-residue polypeptide: Methylthioribulose-1-phosphate dehydratase (212 aa).

Zn(2+) contacts are provided by H97 and H99.

Belongs to the aldolase class II family. MtnB subfamily. Homotetramer. The cofactor is Zn(2+).

The enzyme catalyses 5-(methylsulfanyl)-D-ribulose 1-phosphate = 5-methylsulfanyl-2,3-dioxopentyl phosphate + H2O. The protein operates within amino-acid biosynthesis; L-methionine biosynthesis via salvage pathway; L-methionine from S-methyl-5-thio-alpha-D-ribose 1-phosphate: step 2/6. Its function is as follows. Catalyzes the dehydration of methylthioribulose-1-phosphate (MTRu-1-P) into 2,3-diketo-5-methylthiopentyl-1-phosphate (DK-MTP-1-P). This Bacillus cereus (strain G9842) protein is Methylthioribulose-1-phosphate dehydratase.